A 725-amino-acid chain; its full sequence is N-alpha-acetyltransferase 35, NatC auxiliary subunit (725 aa).

The interval 548–573 is disordered; sequence ERIMEEQQKGRSSKKTKKKKKVRPLS. The span at 558–571 shows a compositional bias: basic residues; sequence RSSKKTKKKKKVRP.

It belongs to the MAK10 family. Component of the N-terminal acetyltransferase C (NatC) complex, which is composed of NAA35, NAA38 and NAA30. Expressed in primary spermatocytes, basal epidermis, interstitial fibroblasts of skeletal muscle, and intestinal crypts.

The protein localises to the cytoplasm. In terms of biological role, auxillary component of the N-terminal acetyltransferase C (NatC) complex which catalyzes acetylation of N-terminal methionine residues. N-terminal acetylation protects proteins from ubiquitination and degradation by the N-end rule pathway. Involved in regulation of apoptosis and proliferation of smooth muscle cells. This Rattus norvegicus (Rat) protein is N-alpha-acetyltransferase 35, NatC auxiliary subunit (Naa35).